A 241-amino-acid polypeptide reads, in one-letter code: Large ribosomal subunit protein uL1 (241 aa).

This sequence belongs to the universal ribosomal protein uL1 family. Part of the 50S ribosomal subunit.

Its function is as follows. Binds directly to 23S rRNA. The L1 stalk is quite mobile in the ribosome, and is involved in E site tRNA release. Functionally, protein L1 is also a translational repressor protein, it controls the translation of the L11 operon by binding to its mRNA. The protein is Large ribosomal subunit protein uL1 of Streptomyces avermitilis (strain ATCC 31267 / DSM 46492 / JCM 5070 / NBRC 14893 / NCIMB 12804 / NRRL 8165 / MA-4680).